A 146-amino-acid polypeptide reads, in one-letter code: Myoglobin (146 aa).

Residues 2-140 (ADLDAVLKCW…VIADLEANYK (139 aa)) enclose the Globin domain. His-59 contributes to the nitrite binding site. His-59 lines the O2 pocket. His-88 serves as a coordination point for heme b.

This sequence belongs to the globin family. In terms of assembly, monomeric.

It is found in the cytoplasm. It localises to the sarcoplasm. The catalysed reaction is Fe(III)-heme b-[protein] + nitric oxide + H2O = Fe(II)-heme b-[protein] + nitrite + 2 H(+). It catalyses the reaction H2O2 + AH2 = A + 2 H2O. Monomeric heme protein which primary function is to store oxygen and facilitate its diffusion within muscle tissues. Reversibly binds oxygen through a pentacoordinated heme iron and enables its timely and efficient release as needed during periods of heightened demand. Depending on the oxidative conditions of tissues and cells, and in addition to its ability to bind oxygen, it also has a nitrite reductase activity whereby it regulates the production of bioactive nitric oxide. Under stress conditions, like hypoxia and anoxia, it also protects cells against reactive oxygen species thanks to its pseudoperoxidase activity. This chain is Myoglobin (mb), found in Katsuwonus pelamis (Skipjack tuna).